The primary structure comprises 294 residues: Bifunctional protein FolD (294 aa).

Residues 176 to 178 (GAS), Ser201, and Ile242 contribute to the NADP(+) site.

The protein belongs to the tetrahydrofolate dehydrogenase/cyclohydrolase family. As to quaternary structure, homodimer.

The enzyme catalyses (6R)-5,10-methylene-5,6,7,8-tetrahydrofolate + NADP(+) = (6R)-5,10-methenyltetrahydrofolate + NADPH. It catalyses the reaction (6R)-5,10-methenyltetrahydrofolate + H2O = (6R)-10-formyltetrahydrofolate + H(+). The protein operates within one-carbon metabolism; tetrahydrofolate interconversion. Catalyzes the oxidation of 5,10-methylenetetrahydrofolate to 5,10-methenyltetrahydrofolate and then the hydrolysis of 5,10-methenyltetrahydrofolate to 10-formyltetrahydrofolate. The protein is Bifunctional protein FolD of Bordetella petrii (strain ATCC BAA-461 / DSM 12804 / CCUG 43448).